We begin with the raw amino-acid sequence, 557 residues long: Formate--tetrahydrofolate ligase (557 aa).

T66–S73 contacts ATP.

It belongs to the formate--tetrahydrofolate ligase family.

The catalysed reaction is (6S)-5,6,7,8-tetrahydrofolate + formate + ATP = (6R)-10-formyltetrahydrofolate + ADP + phosphate. It functions in the pathway one-carbon metabolism; tetrahydrofolate interconversion. The sequence is that of Formate--tetrahydrofolate ligase from Clostridium botulinum (strain Loch Maree / Type A3).